Reading from the N-terminus, the 162-residue chain is Ribosome-binding factor A (162 aa).

The disordered stretch occupies residues 123–162 (VARVAAGASPAGDPDPYKEPRVEDADDAEVDEPSRSRQAD). Over residues 125–136 (RVAAGASPAGDP) the composition is skewed to low complexity.

The protein belongs to the RbfA family. As to quaternary structure, monomer. Binds 30S ribosomal subunits, but not 50S ribosomal subunits or 70S ribosomes.

The protein resides in the cytoplasm. In terms of biological role, one of several proteins that assist in the late maturation steps of the functional core of the 30S ribosomal subunit. Associates with free 30S ribosomal subunits (but not with 30S subunits that are part of 70S ribosomes or polysomes). Required for efficient processing of 16S rRNA. May interact with the 5'-terminal helix region of 16S rRNA. The protein is Ribosome-binding factor A of Rhodococcus opacus (strain B4).